A 359-amino-acid chain; its full sequence is Src kinase-associated phosphoprotein 1 (359 aa).

The PH domain occupies 107-210; sequence NVIKQGYLEK…WVDQISFLLK (104 aa). 3 positions are modified to phosphotyrosine: Tyr142, Tyr219, and Tyr232. Positions 219 to 237 are enriched in acidic residues; sequence YEEDEEEEEKEETYDDIDG. Residues 219–239 are disordered; the sequence is YEEDEEEEEKEETYDDIDGFD. Tyr271 and Tyr295 each carry phosphotyrosine; by FYN. The segment at 290–295 is interaction with FYB1; sequence RKGVDY. The SH3 domain occupies 294 to 355; the sequence is DYASYYQGLW…PKEYLTTAFE (62 aa).

The protein belongs to the SKAP family. Homodimer. Interacts with FYN. Interacts with PTPRC. Interacts with GRB2 when phosphorylated on Tyr-271. Interacts with FYB1, which is required for SKAP2 protein stability. Part of a complex consisting of SKAP1, FYB1 and CLNK. Interacts with RASGRP1. Interacts with FYB2. In terms of processing, phosphorylated on tyrosines. Phosphorylation by FYN on Tyr-271 is required for GRB2 interaction. Phosphorylation by FYN on Tyr-295 abolishes interaction with FYB1. Tyr-232 is dephosphorylated by PTPRC. In terms of tissue distribution, highly expressed in thymocytes and peripheral blood lymphocytes. Also expressed in spleen cells and testis. Present in T-cells (at protein level).

It localises to the cytoplasm. It is found in the nucleus. The protein localises to the cell membrane. Positively regulates T-cell receptor signaling by enhancing the MAP kinase pathway. Required for optimal conjugation between T-cells and antigen-presenting cells by promoting the clustering of integrin ITGAL on the surface of T-cells. May be involved in high affinity immunoglobulin epsilon receptor signaling in mast cells. This Homo sapiens (Human) protein is Src kinase-associated phosphoprotein 1 (SKAP1).